A 302-amino-acid chain; its full sequence is Spermidine synthase (302 aa).

Position 1 is an N-acetylmethionine (M1). In terms of domain architecture, PABS spans 18 to 253 (EGWFRETCSL…GQIGFMLCSK (236 aa)). Q49 provides a ligand contact to S-adenosyl 3-(methylsulfanyl)propylamine. Y79 is a binding site for putrescine. Residues Q80, D104, E124, 155 to 156 (DG), and D173 contribute to the S-adenosyl 3-(methylsulfanyl)propylamine site. The Proton acceptor role is filled by D173. Putrescine contacts are provided by residues 173 to 176 (DSSD) and Y241.

Belongs to the spermidine/spermine synthase family. As to quaternary structure, homodimer or homotetramer.

The catalysed reaction is S-adenosyl 3-(methylsulfanyl)propylamine + putrescine = S-methyl-5'-thioadenosine + spermidine + H(+). It participates in amine and polyamine biosynthesis; spermidine biosynthesis; spermidine from putrescine: step 1/1. Its activity is regulated as follows. The activity is thought to be regulated mainly by the availability of decarboxylated S-adenosylmethionine. Functionally, catalyzes the production of spermidine from putrescine and decarboxylated S-adenosylmethionine (dcSAM). Has a strong preference for putrescine as substrate, and has very low activity towards 1,3-diaminopropane. Has extremely low activity towards spermidine. This chain is Spermidine synthase (SRM), found in Homo sapiens (Human).